Reading from the N-terminus, the 403-residue chain is Phosphopentomutase (403 aa).

Mn(2+)-binding residues include Asp13, Asp298, His303, Asp339, His340, and His351.

Belongs to the phosphopentomutase family. Mn(2+) serves as cofactor.

It localises to the cytoplasm. The enzyme catalyses 2-deoxy-alpha-D-ribose 1-phosphate = 2-deoxy-D-ribose 5-phosphate. It carries out the reaction alpha-D-ribose 1-phosphate = D-ribose 5-phosphate. It participates in carbohydrate degradation; 2-deoxy-D-ribose 1-phosphate degradation; D-glyceraldehyde 3-phosphate and acetaldehyde from 2-deoxy-alpha-D-ribose 1-phosphate: step 1/2. In terms of biological role, isomerase that catalyzes the conversion of deoxy-ribose 1-phosphate (dRib-1-P) and ribose 1-phosphate (Rib-1-P) to deoxy-ribose 5-phosphate (dRib-5-P) and ribose 5-phosphate (Rib-5-P), respectively. This Streptococcus pneumoniae serotype 2 (strain D39 / NCTC 7466) protein is Phosphopentomutase.